Here is a 429-residue protein sequence, read N- to C-terminus: Ribosomal RNA small subunit methyltransferase B (429 aa).

Residues 254-260 (CAAPGGK), D277, D303, and D322 contribute to the S-adenosyl-L-methionine site. The active-site Nucleophile is C375.

The protein belongs to the class I-like SAM-binding methyltransferase superfamily. RsmB/NOP family.

The protein resides in the cytoplasm. The enzyme catalyses cytidine(967) in 16S rRNA + S-adenosyl-L-methionine = 5-methylcytidine(967) in 16S rRNA + S-adenosyl-L-homocysteine + H(+). Specifically methylates the cytosine at position 967 (m5C967) of 16S rRNA. The chain is Ribosomal RNA small subunit methyltransferase B from Escherichia coli O127:H6 (strain E2348/69 / EPEC).